Consider the following 374-residue polypeptide: Anthranilate O-methyltransferase 2 (374 aa).

Tyr-18 contributes to the S-adenosyl-L-homocysteine binding site. Gln-25 is a binding site for anthranilate. Residues Cys-59, Asn-64, Asp-98, Leu-99, Ser-142, and Tyr-143 each contribute to the S-adenosyl-L-homocysteine site. Trp-164 contributes to the anthranilate binding site. Residues Glu-261 and Phe-263 each coordinate Mg(2+).

It belongs to the methyltransferase superfamily. Type-7 methyltransferase family. SABATH subfamily.

The enzyme catalyses anthranilate + S-adenosyl-L-methionine = O-methyl anthranilate + S-adenosyl-L-homocysteine. In terms of biological role, methyltransferase involved in the biosynthesis of methyl anthranilate in response to stresses. Utilizes anthranilic acid as substrate. Produces exclusively the O-methyl ester. This chain is Anthranilate O-methyltransferase 2 (AAMT2), found in Zea mays (Maize).